The sequence spans 370 residues: Protein DUF642 L-GALACTONO-1,4-LACTONE-RESPONSIVE GENE 1 (370 aa).

The signal sequence occupies residues 1–22 (MMYQEAALLLALLFISSNVVLS). N-linked (GlcNAc...) asparagine glycosylation is present at N124.

As to expression, expressed at low levels in roots, seedlings and leaves.

The protein localises to the secreted. It is found in the cell wall. The sequence is that of Protein DUF642 L-GALACTONO-1,4-LACTONE-RESPONSIVE GENE 1 from Arabidopsis thaliana (Mouse-ear cress).